The chain runs to 475 residues: Ribulose bisphosphate carboxylase large chain (475 aa).

A propeptide spanning residues 1–2 (MS) is cleaved from the precursor. Pro-3 is modified (N-acetylproline). N6,N6,N6-trimethyllysine is present on Lys-14. Positions 123 and 173 each coordinate substrate. Catalysis depends on Lys-175, which acts as the Proton acceptor. Lys-177 is a substrate binding site. Mg(2+) contacts are provided by Lys-201, Asp-203, and Glu-204. At Lys-201 the chain carries N6-carboxylysine. His-294 acts as the Proton acceptor in catalysis. 3 residues coordinate substrate: Arg-295, His-327, and Ser-379.

The protein belongs to the RuBisCO large chain family. Type I subfamily. As to quaternary structure, heterohexadecamer of 8 large chains and 8 small chains; disulfide-linked. The disulfide link is formed within the large subunit homodimers. The cofactor is Mg(2+). Post-translationally, the disulfide bond which can form in the large chain dimeric partners within the hexadecamer appears to be associated with oxidative stress and protein turnover.

It localises to the plastid. The protein resides in the chloroplast. The enzyme catalyses 2 (2R)-3-phosphoglycerate + 2 H(+) = D-ribulose 1,5-bisphosphate + CO2 + H2O. It catalyses the reaction D-ribulose 1,5-bisphosphate + O2 = 2-phosphoglycolate + (2R)-3-phosphoglycerate + 2 H(+). Its function is as follows. RuBisCO catalyzes two reactions: the carboxylation of D-ribulose 1,5-bisphosphate, the primary event in carbon dioxide fixation, as well as the oxidative fragmentation of the pentose substrate in the photorespiration process. Both reactions occur simultaneously and in competition at the same active site. The sequence is that of Ribulose bisphosphate carboxylase large chain from Pseudolarix amabilis (Golden larch).